A 230-amino-acid chain; its full sequence is Large ribosomal subunit protein uL1 (230 aa).

It belongs to the universal ribosomal protein uL1 family. Part of the 50S ribosomal subunit.

In terms of biological role, binds directly to 23S rRNA. The L1 stalk is quite mobile in the ribosome, and is involved in E site tRNA release. Protein L1 is also a translational repressor protein, it controls the translation of the L11 operon by binding to its mRNA. The polypeptide is Large ribosomal subunit protein uL1 (Staphylococcus aureus (strain Mu3 / ATCC 700698)).